A 447-amino-acid polypeptide reads, in one-letter code: NADP-specific glutamate dehydrogenase (447 aa).

The substrate site is built by Lys-92, Gln-113, and Lys-116. Lys-128 acts as the Proton donor in catalysis. Position 167 (Gly-167) interacts with substrate. Residues Thr-211 and Asn-242 each contribute to the NADP(+) site. Ser-380 provides a ligand contact to substrate.

The protein belongs to the Glu/Leu/Phe/Val dehydrogenases family. In terms of assembly, homohexamer.

The enzyme catalyses L-glutamate + NADP(+) + H2O = 2-oxoglutarate + NH4(+) + NADPH + H(+). Competitively inhibited by homoserine and by glutamine. In terms of biological role, catalyzes the reversible oxidative deamination of glutamate to alpha-ketoglutarate and ammonia. This chain is NADP-specific glutamate dehydrogenase, found in Escherichia coli (strain K12).